Reading from the N-terminus, the 99-residue chain is DNA-binding protein HU (99 aa).

Positions His-63–Ala-82 are disordered.

This sequence belongs to the bacterial histone-like protein family. In terms of assembly, homodimer.

In terms of biological role, histone-like DNA-binding protein which is capable of wrapping DNA to stabilize it, and thus to prevent its denaturation under extreme environmental conditions. The polypeptide is DNA-binding protein HU (hup) (Rickettsia prowazekii (strain Madrid E)).